The following is a 191-amino-acid chain: FAD-linked sulfhydryl oxidase ERV1 (191 aa).

The ERV/ALR sulfhydryl oxidase domain occupies 72–172 (GPVTKEDLGR…FPCERVDARW (101 aa)). FAD contacts are provided by Lys76, Arg81, Trp84, Glu121, His125, Cys148, His151, Asn152, Asn155, Lys160, and Arg171. The cysteines at positions 119 and 122 are disulfide-linked. A disulfide bridge connects residues Cys148 and Cys165. Cys177 and Cys182 are oxidised to a cystine. Residues 177–182 (CEQKSC) carry the Required for dimerization and substrate specificity motif.

Homodimer. FAD is required as a cofactor. Contains three disulfide bonds; one catalytic disulfide (Cys-119 to Cys-122), one structural disulfide (Cys-148 to Cys-165), and one shuttle disulfide (Cys-177 to Cys-182).

The protein localises to the mitochondrion. It catalyses the reaction 2 R'C(R)SH + O2 = R'C(R)S-S(R)CR' + H2O2. Functionally, FAD-dependent sulfhydryl oxidase that catalyzes disulfide bond formation. Oxidizes thioredoxin in vitro. Required for the import and folding of small cysteine-containing proteins in the mitochondrial intermembrane space, and can act independently of the oxidoreductase MIA40. Can oxidize the cytochrome c oxidase assembly protein COX19, a typical substrate of MIA40. The chain is FAD-linked sulfhydryl oxidase ERV1 (ERV1) from Arabidopsis thaliana (Mouse-ear cress).